A 631-amino-acid polypeptide reads, in one-letter code: 1-deoxy-D-xylulose-5-phosphate synthase (631 aa).

Thiamine diphosphate-binding positions include His-73 and 114–116 (GHS). Position 145 (Asp-145) interacts with Mg(2+). Thiamine diphosphate contacts are provided by residues 146–147 (GA), Asn-174, Tyr-285, and Glu-366. Asn-174 serves as a coordination point for Mg(2+).

Belongs to the transketolase family. DXPS subfamily. Homodimer. It depends on Mg(2+) as a cofactor. Requires thiamine diphosphate as cofactor.

It catalyses the reaction D-glyceraldehyde 3-phosphate + pyruvate + H(+) = 1-deoxy-D-xylulose 5-phosphate + CO2. Its pathway is metabolic intermediate biosynthesis; 1-deoxy-D-xylulose 5-phosphate biosynthesis; 1-deoxy-D-xylulose 5-phosphate from D-glyceraldehyde 3-phosphate and pyruvate: step 1/1. Functionally, catalyzes the acyloin condensation reaction between C atoms 2 and 3 of pyruvate and glyceraldehyde 3-phosphate to yield 1-deoxy-D-xylulose-5-phosphate (DXP). This Desulfitobacterium hafniense (strain Y51) protein is 1-deoxy-D-xylulose-5-phosphate synthase.